A 1195-amino-acid chain; its full sequence is Chromosome partition protein Smc (1195 aa).

Pro-33–Asn-40 contacts ATP. Coiled coils occupy residues Gly-185–Gln-241, Asp-273–Leu-348, and Gln-380–Gln-528. One can recognise an SMC hinge domain in the interval Pro-542–Tyr-658. The stretch at Gly-698 to Thr-1043 forms a coiled coil.

Belongs to the SMC family. Homodimer.

Its subcellular location is the cytoplasm. Required for chromosome condensation and partitioning. In Synechococcus sp. (strain ATCC 27144 / PCC 6301 / SAUG 1402/1) (Anacystis nidulans), this protein is Chromosome partition protein Smc.